The following is an 85-amino-acid chain: UPF0386 protein Meso_1721 (85 aa).

It belongs to the UPF0386 family.

The sequence is that of UPF0386 protein Meso_1721 from Chelativorans sp. (strain BNC1).